Consider the following 130-residue polypeptide: Small ribosomal subunit protein uS11 (130 aa).

It belongs to the universal ribosomal protein uS11 family. In terms of assembly, part of the 30S ribosomal subunit. Interacts with proteins S7 and S18. Binds to IF-3.

Located on the platform of the 30S subunit, it bridges several disparate RNA helices of the 16S rRNA. Forms part of the Shine-Dalgarno cleft in the 70S ribosome. This Aliarcobacter butzleri (strain RM4018) (Arcobacter butzleri) protein is Small ribosomal subunit protein uS11.